Here is a 619-residue protein sequence, read N- to C-terminus: Phosphomethylpyrimidine synthase (619 aa).

The span at 1–11 shows a compositional bias: polar residues; the sequence is MHEQRSLTMNA. Residues 1–25 form a disordered region; that stretch reads MHEQRSLTMNALTPAVSTGPLPASR. Substrate contacts are provided by residues N220, M249, Y278, H314, 334–336, 375–378, and E414; these read SRG and DGLR. Residue H418 participates in Zn(2+) binding. Y441 provides a ligand contact to substrate. H482 serves as a coordination point for Zn(2+). [4Fe-4S] cluster-binding residues include C562, C565, and C570.

Belongs to the ThiC family. As to quaternary structure, homodimer. Requires [4Fe-4S] cluster as cofactor.

It catalyses the reaction 5-amino-1-(5-phospho-beta-D-ribosyl)imidazole + S-adenosyl-L-methionine = 4-amino-2-methyl-5-(phosphooxymethyl)pyrimidine + CO + 5'-deoxyadenosine + formate + L-methionine + 3 H(+). It functions in the pathway cofactor biosynthesis; thiamine diphosphate biosynthesis. In terms of biological role, catalyzes the synthesis of the hydroxymethylpyrimidine phosphate (HMP-P) moiety of thiamine from aminoimidazole ribotide (AIR) in a radical S-adenosyl-L-methionine (SAM)-dependent reaction. The chain is Phosphomethylpyrimidine synthase from Mesorhizobium japonicum (strain LMG 29417 / CECT 9101 / MAFF 303099) (Mesorhizobium loti (strain MAFF 303099)).